Here is a 130-residue protein sequence, read N- to C-terminus: Methylglyoxal synthase (130 aa).

The MGS-like domain occupies 1–130 (MSKPRIALIA…DLARNMQDVC (130 aa)). Substrate-binding positions include histidine 11, lysine 15, 37 to 40 (TGTT), and 57 to 58 (SG). Aspartate 63 (proton donor/acceptor) is an active-site residue. Histidine 90 is a binding site for substrate.

It belongs to the methylglyoxal synthase family.

It carries out the reaction dihydroxyacetone phosphate = methylglyoxal + phosphate. In terms of biological role, catalyzes the formation of methylglyoxal from dihydroxyacetone phosphate. The chain is Methylglyoxal synthase from Burkholderia cenocepacia (strain HI2424).